The sequence spans 231 residues: Probable transglycosylase SceD (231 aa).

The signal sequence occupies residues 1–27; the sequence is MKKTLLASSLAVGLGIVAGNAGHEAHA. A disordered region spans residues 93–153; it reads SAQAPATNNV…ESKASEGSSV (61 aa). Polar residues predominate over residues 96–116; that stretch reads APATNNVAPSADQANQVQSQE. The segment covering 119–137 has biased composition (low complexity); the sequence is APQNAQTQQPQASTSNNSQ. Residues 138–153 are compositionally biased toward polar residues; the sequence is VTATPTESKASEGSSV.

Belongs to the transglycosylase family. SceD subfamily.

The protein localises to the secreted. Is able to cleave peptidoglycan and affects clumping and separation of bacterial cells. The protein is Probable transglycosylase SceD (sceD) of Staphylococcus aureus (strain bovine RF122 / ET3-1).